Consider the following 165-residue polypeptide: Endoribonuclease YbeY (165 aa).

H130, H134, and H140 together coordinate Zn(2+).

The protein belongs to the endoribonuclease YbeY family. The cofactor is Zn(2+).

The protein resides in the cytoplasm. Single strand-specific metallo-endoribonuclease involved in late-stage 70S ribosome quality control and in maturation of the 3' terminus of the 16S rRNA. This Streptococcus pneumoniae serotype 4 (strain ATCC BAA-334 / TIGR4) protein is Endoribonuclease YbeY.